Reading from the N-terminus, the 436-residue chain is Trigger factor (436 aa).

A PPIase FKBP-type domain is found at 161 to 246 (DDRVTVDFVG…VNKVEGLSLP (86 aa)).

Belongs to the FKBP-type PPIase family. Tig subfamily.

Its subcellular location is the cytoplasm. The catalysed reaction is [protein]-peptidylproline (omega=180) = [protein]-peptidylproline (omega=0). In terms of biological role, involved in protein export. Acts as a chaperone by maintaining the newly synthesized protein in an open conformation. Functions as a peptidyl-prolyl cis-trans isomerase. In Pseudoalteromonas atlantica (strain T6c / ATCC BAA-1087), this protein is Trigger factor.